Reading from the N-terminus, the 565-residue chain is Arginine--tRNA ligase (565 aa).

Positions 128–138 match the 'HIGH' region motif; the sequence is ANPTGPLHVGH.

The protein belongs to the class-I aminoacyl-tRNA synthetase family. In terms of assembly, monomer.

It localises to the cytoplasm. The catalysed reaction is tRNA(Arg) + L-arginine + ATP = L-arginyl-tRNA(Arg) + AMP + diphosphate. This chain is Arginine--tRNA ligase, found in Delftia acidovorans (strain DSM 14801 / SPH-1).